The chain runs to 357 residues: Probable dual-specificity RNA methyltransferase RlmN (357 aa).

The Proton acceptor role is filled by Glu92. One can recognise a Radical SAM core domain in the interval 98–330 (QEYGLSVCVT…KKNGINCVIR (233 aa)). Cysteines 105 and 341 form a disulfide. The [4Fe-4S] cluster site is built by Cys112, Cys116, and Cys119. Residues 164–165 (GE), Ser196, 219–221 (SLH), and Asn297 each bind S-adenosyl-L-methionine. The active-site S-methylcysteine intermediate is Cys341.

This sequence belongs to the radical SAM superfamily. RlmN family. [4Fe-4S] cluster serves as cofactor.

Its subcellular location is the cytoplasm. The enzyme catalyses adenosine(2503) in 23S rRNA + 2 reduced [2Fe-2S]-[ferredoxin] + 2 S-adenosyl-L-methionine = 2-methyladenosine(2503) in 23S rRNA + 5'-deoxyadenosine + L-methionine + 2 oxidized [2Fe-2S]-[ferredoxin] + S-adenosyl-L-homocysteine. It carries out the reaction adenosine(37) in tRNA + 2 reduced [2Fe-2S]-[ferredoxin] + 2 S-adenosyl-L-methionine = 2-methyladenosine(37) in tRNA + 5'-deoxyadenosine + L-methionine + 2 oxidized [2Fe-2S]-[ferredoxin] + S-adenosyl-L-homocysteine. Its function is as follows. Specifically methylates position 2 of adenine 2503 in 23S rRNA and position 2 of adenine 37 in tRNAs. The sequence is that of Probable dual-specificity RNA methyltransferase RlmN from Enterococcus faecalis (strain ATCC 700802 / V583).